The sequence spans 142 residues: MTNYVKKVSIEDFGCQFLHTAHWNNRLRTTGGRFFPNDRHLDFNPKIYREFGIDIFRKIVRHELCHYHLYIQGKGYQHRDKAFKELLEKVDGLRYTPRVTAVKVNYHHYSCQSCGQVYRRRRRVNLRKFACGYCHGRLIESF.

The 135-residue stretch at 4–138 (YVKKVSIEDF…FACGYCHGRL (135 aa)) folds into the SprT-like domain. His62 serves as a coordination point for Zn(2+). Glu63 is an active-site residue. His66 is a binding site for Zn(2+).

It belongs to the SprT family. It depends on Zn(2+) as a cofactor.

It is found in the cytoplasm. The polypeptide is Protein SprT-like (Streptococcus agalactiae serotype Ia (strain ATCC 27591 / A909 / CDC SS700)).